The primary structure comprises 139 residues: Plastocyanin (139 aa).

The signal sequence occupies residues 1–34; sequence MKLISASLRRFSLAVLTILLVVSSFAVFTPSASA. In terms of domain architecture, Plastocyanin-like spans 35–139; it reads ETYQVKLGTD…GMVGTITVQG (105 aa). The Cu cation site is built by His73, Cys123, His126, and Met131.

It belongs to the plastocyanin family. It depends on Cu(2+) as a cofactor.

It localises to the cellular thylakoid membrane. Participates in electron transfer between P700 and the cytochrome b6-f complex in photosystem I. The polypeptide is Plastocyanin (Nostoc punctiforme (strain ATCC 29133 / PCC 73102)).